The following is a 56-amino-acid chain: Preprotein translocase subunit SecG (56 aa).

Topologically, residues 1 to 29 are cytoplasmic; the sequence is MAKEKATLPPTGAGLMRFFDEDTKAVKIS. The chain crosses the membrane as a helical span at residues 30 to 51; sequence PRGVIALTLILVALEILLHAFG. Residues 52–56 are Extracellular-facing; it reads PQIFG.

This sequence belongs to the SEC61-beta family. As to quaternary structure, component of the protein translocase complex. Heterotrimer consisting of alpha (SecY), beta (SecG) and gamma (SecE) subunits. Can form oligomers of the heterotrimer.

The protein resides in the cell membrane. Functionally, involved in protein export. The function of the beta subunit is unknown, but it may be involved in stabilization of the trimeric complex. The protein is Preprotein translocase subunit SecG of Thermococcus onnurineus (strain NA1).